An 817-amino-acid chain; its full sequence is MANIAHLIVSGLLAATVAHGQQYEGSSRSEDAFSYVQPRNTTILGQYGHSPAVLPSPNSTGSGGWQAAHTKARHFVSQLTLEEKADMVTGQPGPCVGNIVAIPRLGFNGLCLQDGPLAIRVADYASVFSAGVTAASTWDRDVLYERAFAMGQEFRAKGAHIALGPVAGPLGRSAYGGRNWEGFAADPYLTGVAMELSVKGYHDAGVQATPKHFIGNEQETQRNPIYNPNGTITDVLQEAVSSNIDDRTMHELYLWPFANAAHAKAAAFMCSYQRLNGSYACQNSKALNGLLKEELGFQGYVMSDWGGTHSGVASIESGLDMNMPGGLGPYGTIPQAGSFYGGNVTQGVKNGTIDEARVDDMIIRIMTPYYWLGQDKDFPSVDPSSADLNTFSPRSTWLRQFNLTGERNRDVRGDHAKIIRRQAAEATVLLKNEKNALPLKSPKSLAIFGNDAGEPTMGAVNQANFEFGTLAAGGGSGTGRFTYVVSPLEAIQSRAKQANTLVQYWMNNTDIATTDVTTLWVPAPPDACLVFLKTWAEEGEDREYLHVDYDGNDVVSSVASKCNNTIVVTHSSGINELPFADHPNVTAILAAHYPGQESGNSIVDVLYGDVNPSGRLPYTIARNGSEYNAPPTTEVTTTGAEDWQAWFNEKLEIDYRYFDAHNISVLYEFGFGLSYTTFNLSEINAEPLVESISSVPEQRPIQPGGNPALWENVYNVSVVVTNTGDVEGKAVPQLYVTFPDSTPAGTPPKQLRGFDKVALKPGQSQAASFQLMRRDLSYWDVVSQQWLIPEGEFVISVGFSSRDLREVVRVTPVSGST.

The N-terminal stretch at 1 to 20 (MANIAHLIVSGLLAATVAHG) is a signal peptide. N-linked (GlcNAc...) asparagine glycosylation is found at Asn40, Asn58, Asn229, and Asn276. Asp304 is an active-site residue. Residues Asn343, Asn350, Asn402, Asn507, Asn563, Asn584, Asn623, Asn662, Asn679, and Asn715 are each glycosylated (N-linked (GlcNAc...) asparagine).

Belongs to the glycosyl hydrolase 3 family.

Its subcellular location is the secreted. The catalysed reaction is Hydrolysis of terminal, non-reducing beta-D-glucosyl residues with release of beta-D-glucose.. It participates in glycan metabolism; cellulose degradation. Functionally, beta-glucosidases are one of a number of cellulolytic enzymes involved in the degradation of cellulosic biomass. Catalyzes the last step releasing glucose from the inhibitory cellobiose. This is Probable beta-glucosidase G (bglG) from Aspergillus terreus (strain NIH 2624 / FGSC A1156).